Consider the following 218-residue polypeptide: Cytidylate kinase (218 aa).

Residue 11 to 19 (GPGASGKGT) coordinates ATP.

Belongs to the cytidylate kinase family. Type 1 subfamily.

It is found in the cytoplasm. It carries out the reaction CMP + ATP = CDP + ADP. It catalyses the reaction dCMP + ATP = dCDP + ADP. The polypeptide is Cytidylate kinase (Neisseria meningitidis serogroup A / serotype 4A (strain DSM 15465 / Z2491)).